The chain runs to 638 residues: uncharacterized protein (638 aa).

The region spanning 1–138 (MDLVELDYLS…KIENALLKYK (138 aa)) is the CID domain. Disordered regions lie at residues 318–338 (QPPLTHSYVHPGPQSHKYSLS) and 615–638 (LGKRKERDDSMDSMSSKVIKQESK).

This is an uncharacterized protein from Schizosaccharomyces pombe (strain 972 / ATCC 24843) (Fission yeast).